We begin with the raw amino-acid sequence, 360 residues long: Phospho-N-acetylmuramoyl-pentapeptide-transferase (360 aa).

The next 10 membrane-spanning stretches (helical) occupy residues 25–45, 73–93, 97–117, 132–152, 168–188, 199–219, 236–256, 263–283, 288–308, and 339–359; these read RAIL…PWVI, TMGG…WADL, YVLA…VDDY, WKYF…FVTA, VAWQ…VGFS, GLAI…AYLV, SGEL…FLWF, VFMG…IAVI, IVFF…ILQV, and IVRF…TLKI.

Belongs to the glycosyltransferase 4 family. MraY subfamily. Requires Mg(2+) as cofactor.

The protein resides in the cell inner membrane. It catalyses the reaction UDP-N-acetyl-alpha-D-muramoyl-L-alanyl-gamma-D-glutamyl-meso-2,6-diaminopimeloyl-D-alanyl-D-alanine + di-trans,octa-cis-undecaprenyl phosphate = di-trans,octa-cis-undecaprenyl diphospho-N-acetyl-alpha-D-muramoyl-L-alanyl-D-glutamyl-meso-2,6-diaminopimeloyl-D-alanyl-D-alanine + UMP. It functions in the pathway cell wall biogenesis; peptidoglycan biosynthesis. Functionally, catalyzes the initial step of the lipid cycle reactions in the biosynthesis of the cell wall peptidoglycan: transfers peptidoglycan precursor phospho-MurNAc-pentapeptide from UDP-MurNAc-pentapeptide onto the lipid carrier undecaprenyl phosphate, yielding undecaprenyl-pyrophosphoryl-MurNAc-pentapeptide, known as lipid I. This is Phospho-N-acetylmuramoyl-pentapeptide-transferase from Teredinibacter turnerae (strain ATCC 39867 / T7901).